We begin with the raw amino-acid sequence, 98 residues long: NADH-ubiquinone oxidoreductase chain 4L (98 aa).

3 consecutive transmembrane segments (helical) span residues 1-21 (MSLTYMNMFMAFMISLLGLLM), 29-49 (SLLCLEGMMLSLFVMMTVIIL), and 61-81 (IILLVFAACEAALGLSLLVMV).

Belongs to the complex I subunit 4L family. As to quaternary structure, core subunit of respiratory chain NADH dehydrogenase (Complex I) which is composed of 45 different subunits.

Its subcellular location is the mitochondrion inner membrane. The catalysed reaction is a ubiquinone + NADH + 5 H(+)(in) = a ubiquinol + NAD(+) + 4 H(+)(out). Core subunit of the mitochondrial membrane respiratory chain NADH dehydrogenase (Complex I) which catalyzes electron transfer from NADH through the respiratory chain, using ubiquinone as an electron acceptor. Part of the enzyme membrane arm which is embedded in the lipid bilayer and involved in proton translocation. The chain is NADH-ubiquinone oxidoreductase chain 4L (MT-ND4L) from Uroderma bilobatum (Tent-making bat).